We begin with the raw amino-acid sequence, 147 residues long: Small ribosomal subunit protein bS6 (147 aa).

The segment at 114-147 (GKGTRAAEQAAAAEAAAPAAAPAEPASAEPAPAV) is disordered. The span at 119 to 147 (AAEQAAAAEAAAPAAAPAEPASAEPAPAV) shows a compositional bias: low complexity.

The protein belongs to the bacterial ribosomal protein bS6 family.

Functionally, binds together with bS18 to 16S ribosomal RNA. The protein is Small ribosomal subunit protein bS6 of Koribacter versatilis (strain Ellin345).